The following is a 132-amino-acid chain: UPF0146 protein PF0123 (132 aa).

It belongs to the UPF0146 family.

In Pyrococcus furiosus (strain ATCC 43587 / DSM 3638 / JCM 8422 / Vc1), this protein is UPF0146 protein PF0123.